The primary structure comprises 315 residues: NAD kinase (315 aa).

Asp-91 functions as the Proton acceptor in the catalytic mechanism. NAD(+) contacts are provided by residues 91–92 (DG), Arg-96, 165–166 (NE), Asp-195, and 206–211 (TAYAFS).

The protein belongs to the NAD kinase family. Requires a divalent metal cation as cofactor.

It is found in the cytoplasm. The catalysed reaction is NAD(+) + ATP = ADP + NADP(+) + H(+). In terms of biological role, involved in the regulation of the intracellular balance of NAD and NADP, and is a key enzyme in the biosynthesis of NADP. Catalyzes specifically the phosphorylation on 2'-hydroxyl of the adenosine moiety of NAD to yield NADP. The sequence is that of NAD kinase from Rhodococcus erythropolis (strain PR4 / NBRC 100887).